Consider the following 1466-residue polypeptide: Helicase ARIP4 (1466 aa).

Disordered stretches follow at residues 1 to 137 (MSDE…ERRK) and 185 to 235 (DSSS…THVN). Acidic residues predominate over residues 11-49 (PDLDPDVELEDEEEEEEEEEVAVEEHDRDDEEGLLDDTS). Low complexity predominate over residues 72–82 (TSTTSSQSEPS). A compositionally biased stretch (basic residues) spans 99 to 114 (KKRAQKPSHMRRNIRK). Residues K114 and K126 each participate in a glycyl lysine isopeptide (Lys-Gly) (interchain with G-Cter in SUMO2) cross-link. The span at 191 to 200 (EDEKSSRDEV) shows a compositional bias: basic and acidic residues. K271 is covalently cross-linked (Glycyl lysine isopeptide (Lys-Gly) (interchain with G-Cter in SUMO2)). Residues 291–511 (RFKTSSGFGC…WCMVDFVRPD (221 aa)) enclose the Helicase ATP-binding domain. 304 to 311 (HSMGLGKT) provides a ligand contact to ATP. Positions 462–465 (DEGH) match the DEAH box motif. Residues 550-554 (LHSLL) carry the LXXLL motif 1 motif. Positions 649 to 670 (SAGTSARCPPHGTKVKGEDSAL) are disordered. Residues K664, K681, K758, K900, K1013, and K1017 each participate in a glycyl lysine isopeptide (Lys-Gly) (interchain with G-Cter in SUMO2) cross-link. Positions 727 to 895 (HLIEESVKLG…RVVDDLNPML (169 aa)) constitute a Helicase C-terminal domain. 2 disordered regions span residues 1026 to 1045 (QSTP…GVSS) and 1120 to 1170 (ATGK…VSPD). Polar residues predominate over residues 1135-1154 (SGSQGPSLASTSNGRHSASS). Phosphoserine occurs at positions 1168 and 1171. 2 disordered regions span residues 1184–1212 (VAAA…MDNS) and 1259–1281 (TPSV…APVQ). T1259 carries the post-translational modification Phosphothreonine. The short motif at 1328-1332 (LSNLL) is the LXXLL motif 2 element. The interval 1444–1466 (AEVGFSSNDDEDKDDDVIEVTGK) is disordered. The span at 1451-1466 (NDDEDKDDDVIEVTGK) shows a compositional bias: acidic residues.

This sequence belongs to the SNF2/RAD54 helicase family. Interacts with AR via its N-terminus. Interacts with DYRK1A. Binds DNA and mononucleosomes, but does not seem to form large multiprotein complexes. In terms of processing, sumoylated. Expressed at relatively low level, with highest expression in testis, liver and kidney. In brain, it is expressed in hippocampal and cerebellar neurons. In testis, it is present at high level in Sertoli cell nuclei. Also present in Leydig cell (at protein level).

It localises to the nucleus. The catalysed reaction is ATP + H2O = ADP + phosphate + H(+). Enzyme activity is enhanced by dsDNA (double-stranded DNA) and ssDNA (single-stranded DNA). Its function is as follows. DNA helicase that modulates androgen receptor (AR)-dependent transactivation in a promoter-dependent manner. Not able to remodel mononucleosomes in vitro. Acts as an AR-coregulator in Sertoli cells. The protein is Helicase ARIP4 (Rad54l2) of Mus musculus (Mouse).